We begin with the raw amino-acid sequence, 131 residues long: Single-stranded DNA-binding protein 1 (131 aa).

Residues 1-103 (MYNKVIAIGR…VLCQSFQLLE (103 aa)) form the SSB domain.

Homotetramer.

The polypeptide is Single-stranded DNA-binding protein 1 (ssb1) (Streptococcus pyogenes serotype M6 (strain ATCC BAA-946 / MGAS10394)).